A 673-amino-acid chain; its full sequence is UvrABC system protein B (673 aa).

A Helicase ATP-binding domain is found at 26 to 183 (EGLEDGLAHQ…RRLAELQYTR (158 aa)). 39 to 46 (GVTGSGKT) serves as a coordination point for ATP. Positions 92–115 (YYDYYQPEAYVPSSDTFIEKDASV) match the Beta-hairpin motif. The Helicase C-terminal domain maps to 431 to 597 (QVDDLLSEIR…GLNKKVVDIL (167 aa)). Residues 633-668 (QQKIHELEGQMMQHAQNLEFEEAAEIRDQLHQLREL) form the UVR domain.

It belongs to the UvrB family. As to quaternary structure, forms a heterotetramer with UvrA during the search for lesions. Interacts with UvrC in an incision complex.

It is found in the cytoplasm. Its function is as follows. The UvrABC repair system catalyzes the recognition and processing of DNA lesions. A damage recognition complex composed of 2 UvrA and 2 UvrB subunits scans DNA for abnormalities. Upon binding of the UvrA(2)B(2) complex to a putative damaged site, the DNA wraps around one UvrB monomer. DNA wrap is dependent on ATP binding by UvrB and probably causes local melting of the DNA helix, facilitating insertion of UvrB beta-hairpin between the DNA strands. Then UvrB probes one DNA strand for the presence of a lesion. If a lesion is found the UvrA subunits dissociate and the UvrB-DNA preincision complex is formed. This complex is subsequently bound by UvrC and the second UvrB is released. If no lesion is found, the DNA wraps around the other UvrB subunit that will check the other stand for damage. The polypeptide is UvrABC system protein B (Citrobacter koseri (strain ATCC BAA-895 / CDC 4225-83 / SGSC4696)).